A 418-amino-acid chain; its full sequence is Tyrosine--tRNA ligase (418 aa).

Tyr-34 contributes to the L-tyrosine binding site. The short motif at 39–48 is the 'HIGH' region element; that stretch reads PTADSLHLGH. The L-tyrosine site is built by Tyr-169 and Gln-173. The short motif at 229–233 is the 'KMSKS' region element; it reads KFGKS. Lys-232 contacts ATP. In terms of domain architecture, S4 RNA-binding spans 352-418; it reads NNIVELLVSS…GKKKYFVLTY (67 aa).

It belongs to the class-I aminoacyl-tRNA synthetase family. TyrS type 1 subfamily. In terms of assembly, homodimer.

The protein resides in the cytoplasm. The catalysed reaction is tRNA(Tyr) + L-tyrosine + ATP = L-tyrosyl-tRNA(Tyr) + AMP + diphosphate + H(+). Catalyzes the attachment of tyrosine to tRNA(Tyr) in a two-step reaction: tyrosine is first activated by ATP to form Tyr-AMP and then transferred to the acceptor end of tRNA(Tyr). This chain is Tyrosine--tRNA ligase, found in Streptococcus pneumoniae (strain Taiwan19F-14).